A 352-amino-acid chain; its full sequence is N-acetyl-gamma-glutamyl-phosphate reductase (352 aa).

Residue Cys155 is part of the active site.

The protein belongs to the NAGSA dehydrogenase family. Type 1 subfamily.

The protein resides in the cytoplasm. It carries out the reaction N-acetyl-L-glutamate 5-semialdehyde + phosphate + NADP(+) = N-acetyl-L-glutamyl 5-phosphate + NADPH + H(+). It participates in amino-acid biosynthesis; L-arginine biosynthesis; N(2)-acetyl-L-ornithine from L-glutamate: step 3/4. Its function is as follows. Catalyzes the NADPH-dependent reduction of N-acetyl-5-glutamyl phosphate to yield N-acetyl-L-glutamate 5-semialdehyde. The polypeptide is N-acetyl-gamma-glutamyl-phosphate reductase (Cyanothece sp. (strain PCC 7425 / ATCC 29141)).